We begin with the raw amino-acid sequence, 353 residues long: Quinolinate synthase (353 aa).

Iminosuccinate is bound by residues histidine 47 and serine 68. Residue cysteine 113 participates in [4Fe-4S] cluster binding. Residues 139 to 141 (YAN) and serine 156 contribute to the iminosuccinate site. Cysteine 200 lines the [4Fe-4S] cluster pocket. Iminosuccinate is bound by residues 226–228 (HPE) and threonine 243. Cysteine 297 provides a ligand contact to [4Fe-4S] cluster.

This sequence belongs to the quinolinate synthase family. Type 1 subfamily. Requires [4Fe-4S] cluster as cofactor.

It localises to the cytoplasm. The catalysed reaction is iminosuccinate + dihydroxyacetone phosphate = quinolinate + phosphate + 2 H2O + H(+). It participates in cofactor biosynthesis; NAD(+) biosynthesis; quinolinate from iminoaspartate: step 1/1. Its function is as follows. Catalyzes the condensation of iminoaspartate with dihydroxyacetone phosphate to form quinolinate. This chain is Quinolinate synthase, found in Vibrio vulnificus (strain YJ016).